We begin with the raw amino-acid sequence, 312 residues long: Photosystem I assembly protein Ycf4 (312 aa).

Transmembrane regions (helical) follow at residues 42–62 (WAFI…SSYF), 91–111 (IILF…GLFL), and 113–133 (FYLW…IYIY).

This sequence belongs to the Ycf4 family.

Its subcellular location is the plastid. The protein localises to the chloroplast thylakoid membrane. In terms of biological role, seems to be required for the assembly of the photosystem I complex. This chain is Photosystem I assembly protein Ycf4, found in Pleurastrum terricola (Filamentous green alga).